A 514-amino-acid polypeptide reads, in one-letter code: Bifunctional purine biosynthesis protein PurH (514 aa).

The 146-residue stretch at 1-146 (MPPLALLSTS…KNFAHVTVLC (146 aa)) folds into the MGS-like domain.

This sequence belongs to the PurH family.

It carries out the reaction (6R)-10-formyltetrahydrofolate + 5-amino-1-(5-phospho-beta-D-ribosyl)imidazole-4-carboxamide = 5-formamido-1-(5-phospho-D-ribosyl)imidazole-4-carboxamide + (6S)-5,6,7,8-tetrahydrofolate. The enzyme catalyses IMP + H2O = 5-formamido-1-(5-phospho-D-ribosyl)imidazole-4-carboxamide. The protein operates within purine metabolism; IMP biosynthesis via de novo pathway; 5-formamido-1-(5-phospho-D-ribosyl)imidazole-4-carboxamide from 5-amino-1-(5-phospho-D-ribosyl)imidazole-4-carboxamide (10-formyl THF route): step 1/1. Its pathway is purine metabolism; IMP biosynthesis via de novo pathway; IMP from 5-formamido-1-(5-phospho-D-ribosyl)imidazole-4-carboxamide: step 1/1. The sequence is that of Bifunctional purine biosynthesis protein PurH from Cyanothece sp. (strain PCC 7425 / ATCC 29141).